A 281-amino-acid polypeptide reads, in one-letter code: Nucleotide-binding protein PSHAa2554 (281 aa).

8-15 (GRSGSGKS) provides a ligand contact to ATP. GTP is bound at residue 56–59 (DVRN).

It belongs to the RapZ-like family.

Displays ATPase and GTPase activities. This chain is Nucleotide-binding protein PSHAa2554, found in Pseudoalteromonas translucida (strain TAC 125).